The sequence spans 127 residues: Small ribosomal subunit protein uS12 (127 aa).

Asp89 bears the 3-methylthioaspartic acid mark. A disordered region spans residues 104–127 (TQGVKDRKQARSKYGTKRAKAGKK). Basic residues predominate over residues 113–127 (ARSKYGTKRAKAGKK).

The protein belongs to the universal ribosomal protein uS12 family. In terms of assembly, part of the 30S ribosomal subunit. Contacts proteins S8 and S17. May interact with IF1 in the 30S initiation complex.

Its function is as follows. With S4 and S5 plays an important role in translational accuracy. In terms of biological role, interacts with and stabilizes bases of the 16S rRNA that are involved in tRNA selection in the A site and with the mRNA backbone. Located at the interface of the 30S and 50S subunits, it traverses the body of the 30S subunit contacting proteins on the other side and probably holding the rRNA structure together. The combined cluster of proteins S8, S12 and S17 appears to hold together the shoulder and platform of the 30S subunit. In Herminiimonas arsenicoxydans, this protein is Small ribosomal subunit protein uS12.